We begin with the raw amino-acid sequence, 1254 residues long: Ubiquitin carboxyl-terminal hydrolase 12 (1254 aa).

Position 84 is a phosphoserine (serine 84). One can recognise a DUSP domain in the interval 97-199 (NVLEQQRDVV…GSYPVVTNLV (103 aa)). The USP domain maps to 364–1110 (TGLVNLGNTC…SAYLLFYIRR (747 aa)). Catalysis depends on cysteine 373, which acts as the Nucleophile. Residues 827–893 (DEGDTEGSEA…EPELTDKPEA (67 aa)) form a disordered region. The span at 854–864 (TVTNNENVNNT) shows a compositional bias: low complexity. The span at 867 to 883 (RDEDMELTDDVEEDAST) shows a compositional bias: acidic residues. Histidine 1068 acts as the Proton acceptor in catalysis. Serine 1160 carries the phosphoserine modification. Residues 1188–1207 (QDCNDEDDNDDGERTNSGRR) are disordered. The segment covering 1189 to 1198 (DCNDEDDNDD) has biased composition (acidic residues).

It belongs to the peptidase C19 family. In terms of assembly, interacts with FZO1.

The enzyme catalyses Thiol-dependent hydrolysis of ester, thioester, amide, peptide and isopeptide bonds formed by the C-terminal Gly of ubiquitin (a 76-residue protein attached to proteins as an intracellular targeting signal).. Its function is as follows. Ubiquitin carboxyl-terminal hydrolase that recognizes ubiquitin chains that stabilize FZO1 and promote mitochondrial fusion. UBP12 deubiquitylates FZO1 only after oligomerization. In Saccharomyces cerevisiae (strain ATCC 204508 / S288c) (Baker's yeast), this protein is Ubiquitin carboxyl-terminal hydrolase 12 (UBP12).